The primary structure comprises 364 residues: GMP reductase (364 aa).

Residues 26-27 (SR), lysine 78, 132-134 (DVA), and 183-184 (IG) contribute to the NADP(+) site. K(+) is bound by residues glycine 184, glycine 186, and cysteine 189. Residue cysteine 189 is the Thioimidate intermediate of the active site. The active-site Proton donor/acceptor is the threonine 191. Arginine 192 contacts K(+). GMP-binding positions include 222–224 (DGG), 245–246 (GG), 271–273 (GMS), and 289–293 (RASEG). NADP(+)-binding positions include methionine 272, 288–289 (YR), and 317–320 (SACT).

Belongs to the IMPDH/GMPR family. GuaC type 1 subfamily. Homotetramer.

The catalysed reaction is IMP + NH4(+) + NADP(+) = GMP + NADPH + 2 H(+). Functionally, catalyzes the irreversible NADPH-dependent deamination of GMP to IMP. It functions in the conversion of nucleobase, nucleoside and nucleotide derivatives of G to A nucleotides, and in maintaining the intracellular balance of A and G nucleotides. The polypeptide is GMP reductase (gmr-1) (Onchocerca volvulus).